Reading from the N-terminus, the 320-residue chain is BTB and MATH domain-containing protein 36 (320 aa).

In terms of domain architecture, MATH spans lysine 7–isoleucine 136. The BTB domain maps to threonine 160 to serine 227.

This Caenorhabditis elegans protein is BTB and MATH domain-containing protein 36 (bath-36).